A 185-amino-acid chain; its full sequence is Elongation factor P (185 aa).

The protein belongs to the elongation factor P family.

It localises to the cytoplasm. The protein operates within protein biosynthesis; polypeptide chain elongation. Its function is as follows. Involved in peptide bond synthesis. Stimulates efficient translation and peptide-bond synthesis on native or reconstituted 70S ribosomes in vitro. Probably functions indirectly by altering the affinity of the ribosome for aminoacyl-tRNA, thus increasing their reactivity as acceptors for peptidyl transferase. This Listeria innocua serovar 6a (strain ATCC BAA-680 / CLIP 11262) protein is Elongation factor P.